Here is a 275-residue protein sequence, read N- to C-terminus: Adenosylcobinamide-GDP ribazoletransferase (275 aa).

6 helical membrane-spanning segments follow: residues Val-52 to Gly-72, Val-73 to Met-93, Met-126 to Val-146, Phe-181 to Leu-201, Val-208 to Ala-228, and Ile-251 to Ala-271.

This sequence belongs to the CobS family. It depends on Mg(2+) as a cofactor.

It is found in the cell membrane. The enzyme catalyses alpha-ribazole + adenosylcob(III)inamide-GDP = adenosylcob(III)alamin + GMP + H(+). It catalyses the reaction alpha-ribazole 5'-phosphate + adenosylcob(III)inamide-GDP = adenosylcob(III)alamin 5'-phosphate + GMP + H(+). Its pathway is cofactor biosynthesis; adenosylcobalamin biosynthesis; adenosylcobalamin from cob(II)yrinate a,c-diamide: step 7/7. In terms of biological role, joins adenosylcobinamide-GDP and alpha-ribazole to generate adenosylcobalamin (Ado-cobalamin). Also synthesizes adenosylcobalamin 5'-phosphate from adenosylcobinamide-GDP and alpha-ribazole 5'-phosphate. This Corynebacterium efficiens (strain DSM 44549 / YS-314 / AJ 12310 / JCM 11189 / NBRC 100395) protein is Adenosylcobinamide-GDP ribazoletransferase.